The chain runs to 748 residues: Photosystem I P700 chlorophyll a apoprotein A1 (748 aa).

Transmembrane regions (helical) follow at residues valine 70–alanine 93, leucine 156–histidine 179, leucine 195–methionine 219, threonine 291–tyrosine 309, tryptophan 346–tyrosine 369, leucine 385–valine 411, alanine 433–histidine 455, and phenylalanine 530–leucine 548. Residues cysteine 572 and cysteine 581 each contribute to the [4Fe-4S] cluster site. 2 helical membrane passes run histidine 588 to tryptophan 609 and leucine 662 to phenylalanine 684. Residue histidine 673 coordinates chlorophyll a'. 2 residues coordinate chlorophyll a: methionine 681 and tyrosine 689. Position 690 (tryptophan 690) interacts with phylloquinone. Residues alanine 722–alanine 742 form a helical membrane-spanning segment.

This sequence belongs to the PsaA/PsaB family. The PsaA/B heterodimer binds the P700 chlorophyll special pair and subsequent electron acceptors. PSI consists of a core antenna complex that captures photons, and an electron transfer chain that converts photonic excitation into a charge separation. The eukaryotic PSI reaction center is composed of at least 11 subunits. The cofactor is P700 is a chlorophyll a/chlorophyll a' dimer, A0 is one or more chlorophyll a, A1 is one or both phylloquinones and FX is a shared 4Fe-4S iron-sulfur center..

The protein resides in the plastid. It localises to the chloroplast thylakoid membrane. The enzyme catalyses reduced [plastocyanin] + hnu + oxidized [2Fe-2S]-[ferredoxin] = oxidized [plastocyanin] + reduced [2Fe-2S]-[ferredoxin]. PsaA and PsaB bind P700, the primary electron donor of photosystem I (PSI), as well as the electron acceptors A0, A1 and FX. PSI is a plastocyanin-ferredoxin oxidoreductase, converting photonic excitation into a charge separation, which transfers an electron from the donor P700 chlorophyll pair to the spectroscopically characterized acceptors A0, A1, FX, FA and FB in turn. Oxidized P700 is reduced on the lumenal side of the thylakoid membrane by plastocyanin. This Chara vulgaris (Common stonewort) protein is Photosystem I P700 chlorophyll a apoprotein A1.